Here is a 222-residue protein sequence, read N- to C-terminus: Iron-sulfur cluster repair protein YtfE (222 aa).

This sequence belongs to the RIC family. YtfE subfamily. As to quaternary structure, homodimer.

It is found in the cytoplasm. Its function is as follows. Di-iron-containing protein involved in the repair of iron-sulfur clusters damaged by oxidative and nitrosative stress conditions. This Musicola paradisiaca (strain Ech703) (Dickeya paradisiaca) protein is Iron-sulfur cluster repair protein YtfE.